Here is a 227-residue protein sequence, read N- to C-terminus: Cytochrome c oxidase subunit 2 (227 aa).

Over 1–14 (MAYPFQLGLQDATS) the chain is Mitochondrial intermembrane. A helical membrane pass occupies residues 15-45 (PIMEELLHFHDHTLMIVFLISSLVLYIISLM). Topologically, residues 46–59 (LTTKLTHTSTMDAQ) are mitochondrial matrix. Residues 60–87 (EVETVWTILPAIILILIALPSLRILYMM) form a helical membrane-spanning segment. Residues 88-227 (DEINNPSLTV…YFETWSALMV (140 aa)) are Mitochondrial intermembrane-facing. Residues His161, Cys196, Glu198, Cys200, His204, and Met207 each coordinate Cu cation. Glu198 serves as a coordination point for Mg(2+). At Tyr218 the chain carries Phosphotyrosine.

This sequence belongs to the cytochrome c oxidase subunit 2 family. As to quaternary structure, component of the cytochrome c oxidase (complex IV, CIV), a multisubunit enzyme composed of 14 subunits. The complex is composed of a catalytic core of 3 subunits MT-CO1, MT-CO2 and MT-CO3, encoded in the mitochondrial DNA, and 11 supernumerary subunits COX4I, COX5A, COX5B, COX6A, COX6B, COX6C, COX7A, COX7B, COX7C, COX8 and NDUFA4, which are encoded in the nuclear genome. The complex exists as a monomer or a dimer and forms supercomplexes (SCs) in the inner mitochondrial membrane with NADH-ubiquinone oxidoreductase (complex I, CI) and ubiquinol-cytochrome c oxidoreductase (cytochrome b-c1 complex, complex III, CIII), resulting in different assemblies (supercomplex SCI(1)III(2)IV(1) and megacomplex MCI(2)III(2)IV(2)). Found in a complex with TMEM177, COA6, COX18, COX20, SCO1 and SCO2. Interacts with TMEM177 in a COX20-dependent manner. Interacts with COX20. Interacts with COX16. Cu cation is required as a cofactor.

It localises to the mitochondrion inner membrane. It carries out the reaction 4 Fe(II)-[cytochrome c] + O2 + 8 H(+)(in) = 4 Fe(III)-[cytochrome c] + 2 H2O + 4 H(+)(out). Functionally, component of the cytochrome c oxidase, the last enzyme in the mitochondrial electron transport chain which drives oxidative phosphorylation. The respiratory chain contains 3 multisubunit complexes succinate dehydrogenase (complex II, CII), ubiquinol-cytochrome c oxidoreductase (cytochrome b-c1 complex, complex III, CIII) and cytochrome c oxidase (complex IV, CIV), that cooperate to transfer electrons derived from NADH and succinate to molecular oxygen, creating an electrochemical gradient over the inner membrane that drives transmembrane transport and the ATP synthase. Cytochrome c oxidase is the component of the respiratory chain that catalyzes the reduction of oxygen to water. Electrons originating from reduced cytochrome c in the intermembrane space (IMS) are transferred via the dinuclear copper A center (CU(A)) of subunit 2 and heme A of subunit 1 to the active site in subunit 1, a binuclear center (BNC) formed by heme A3 and copper B (CU(B)). The BNC reduces molecular oxygen to 2 water molecules using 4 electrons from cytochrome c in the IMS and 4 protons from the mitochondrial matrix. This is Cytochrome c oxidase subunit 2 (MT-CO2) from Urocyon cinereoargenteus (Gray fox).